Reading from the N-terminus, the 156-residue chain is Large ribosomal subunit protein uL30 (156 aa).

This sequence belongs to the universal ribosomal protein uL30 family. As to quaternary structure, part of the 50S ribosomal subunit.

This chain is Large ribosomal subunit protein uL30, found in Thermofilum pendens (strain DSM 2475 / Hrk 5).